The primary structure comprises 89 residues: Putative regulatory protein CYA_2696 (89 aa).

It belongs to the RemA family.

The protein is Putative regulatory protein CYA_2696 of Synechococcus sp. (strain JA-3-3Ab) (Cyanobacteria bacterium Yellowstone A-Prime).